A 359-amino-acid polypeptide reads, in one-letter code: Protein PAM71-homolog, chloroplastic (359 aa).

A chloroplast-targeting transit peptide spans 1–66 (MKLTSLSKNA…DLLWGKFRVR (66 aa)). The disordered stretch occupies residues 71–102 (GVGSGSYSGGEEDGSQSSSLDQSPATSSESLK). Positions 85–98 (SQSSSLDQSPATSS) are enriched in low complexity. Helical transmembrane passes span 110 to 130 (SLSI…ITFV), 149 to 169 (AFSL…AALL), 177 to 197 (LVLL…VVIG), 207 to 227 (FQTT…FFGL), 269 to 289 (LTNP…AEWG), 311 to 331 (GAIA…AFLA), and 339 to 359 (VGYV…FGVF).

This sequence belongs to the GDT1 family.

Its subcellular location is the plastid. It localises to the chloroplast membrane. Its function is as follows. Probable chloroplast-localized Mn(2+)/H(+) and/or Ca(2+)/H(+) antiporter regulating Ca(2+), Mn(2+) and pH homeostasis. The chain is Protein PAM71-homolog, chloroplastic from Arabidopsis thaliana (Mouse-ear cress).